The following is a 301-amino-acid chain: ATP synthase subunit gamma, mitochondrial (301 aa).

Belongs to the ATPase gamma chain family. In terms of assembly, F-type ATPases have 2 components, CF(1) - the catalytic core - and CF(0) - the membrane proton channel. CF(1) has five subunits: alpha(3), beta(3), gamma(1), delta(1), epsilon(1). CF(0) has three main subunits: a, b and c.

The protein resides in the mitochondrion. It localises to the mitochondrion inner membrane. Mitochondrial membrane ATP synthase (F(1)F(0) ATP synthase or Complex V) produces ATP from ADP in the presence of a proton gradient across the membrane which is generated by electron transport complexes of the respiratory chain. F-type ATPases consist of two structural domains, F(1) - containing the extramembraneous catalytic core, and F(0) - containing the membrane proton channel, linked together by a central stalk and a peripheral stalk. During catalysis, ATP synthesis in the catalytic domain of F(1) is coupled via a rotary mechanism of the central stalk subunits to proton translocation. Part of the complex F(1) domain and the central stalk which is part of the complex rotary element. The gamma subunit protrudes into the catalytic domain formed of alpha(3)beta(3). Rotation of the central stalk against the surrounding alpha(3)beta(3) subunits leads to hydrolysis of ATP in three separate catalytic sites on the beta subunits. The polypeptide is ATP synthase subunit gamma, mitochondrial (atp3) (Schizosaccharomyces pombe (strain 972 / ATCC 24843) (Fission yeast)).